A 242-amino-acid polypeptide reads, in one-letter code: Ras-like protein family member 11A (242 aa).

The interval 17-241 is small GTPase-like; sequence ESSSDYLLPK…SSKAKASSAL (225 aa). GTP is bound by residues 34–41, 81–88, and 147–150; these read GAGCVGKS, DTPGGIQA, and NKGD.

Belongs to the small GTPase superfamily. Ras family. As to quaternary structure, interacts with UBF/UBTF.

It localises to the nucleus. It is found in the nucleolus. It catalyses the reaction GTP + H2O = GDP + phosphate + H(+). Functionally, regulator of rDNA transcription. Acts in cooperation UBF/UBTF and positively regulates RNA polymerase I transcription. The polypeptide is Ras-like protein family member 11A (Mus musculus (Mouse)).